The chain runs to 255 residues: tRNA pseudouridine synthase A (255 aa).

Catalysis depends on Asp-60, which acts as the Nucleophile. Tyr-118 provides a ligand contact to substrate.

The protein belongs to the tRNA pseudouridine synthase TruA family. As to quaternary structure, homodimer.

The enzyme catalyses uridine(38/39/40) in tRNA = pseudouridine(38/39/40) in tRNA. In terms of biological role, formation of pseudouridine at positions 38, 39 and 40 in the anticodon stem and loop of transfer RNAs. This chain is tRNA pseudouridine synthase A, found in Leuconostoc mesenteroides subsp. mesenteroides (strain ATCC 8293 / DSM 20343 / BCRC 11652 / CCM 1803 / JCM 6124 / NCDO 523 / NBRC 100496 / NCIMB 8023 / NCTC 12954 / NRRL B-1118 / 37Y).